Reading from the N-terminus, the 280-residue chain is ATP synthase subunit a (280 aa).

A run of 7 helical transmembrane segments spans residues alanine 45–phenylalanine 65, leucine 105–leucine 125, leucine 126–valine 146, leucine 159–phenylalanine 179, phenylalanine 190–leucine 210, methionine 223–glycine 243, and alanine 250–valine 270.

It belongs to the ATPase A chain family. In terms of assembly, F-type ATPases have 2 components, CF(1) - the catalytic core - and CF(0) - the membrane proton channel. CF(1) has five subunits: alpha(3), beta(3), gamma(1), delta(1), epsilon(1). CF(0) has three main subunits: a(1), b(2) and c(9-12). The alpha and beta chains form an alternating ring which encloses part of the gamma chain. CF(1) is attached to CF(0) by a central stalk formed by the gamma and epsilon chains, while a peripheral stalk is formed by the delta and b chains.

It localises to the cell inner membrane. In terms of biological role, key component of the proton channel; it plays a direct role in the translocation of protons across the membrane. The polypeptide is ATP synthase subunit a (Thiobacillus denitrificans (strain ATCC 25259 / T1)).